The sequence spans 366 residues: Phospho-N-acetylmuramoyl-pentapeptide-transferase (366 aa).

Transmembrane regions (helical) follow at residues 25–45, 70–90, 93–113, 134–154, 174–194, 205–225, 245–265, 268–288, 297–317, and 343–363; these read AGAAMFTSALIVFLFGPAIIN, GTPTMGGLMILAGILGGSLLW, LSNVYVVAVLMVTLGFGAIGF, LGIEFLIAAIAVFFMMKMALA, FVINLGYFFVLFGAFVIVGAG, GLAIVPVMIAAATFGVIAYLA, LAVIVGAVIGAGLGFLWFNAP, AIFMGDTGSLALGGLIGSIAV, VIVGGLFVMETLSVIIQVFWF, and QVVIRFWIISVGLALLGLATL.

It belongs to the glycosyltransferase 4 family. MraY subfamily. The cofactor is Mg(2+).

Its subcellular location is the cell inner membrane. It catalyses the reaction UDP-N-acetyl-alpha-D-muramoyl-L-alanyl-gamma-D-glutamyl-meso-2,6-diaminopimeloyl-D-alanyl-D-alanine + di-trans,octa-cis-undecaprenyl phosphate = di-trans,octa-cis-undecaprenyl diphospho-N-acetyl-alpha-D-muramoyl-L-alanyl-D-glutamyl-meso-2,6-diaminopimeloyl-D-alanyl-D-alanine + UMP. It functions in the pathway cell wall biogenesis; peptidoglycan biosynthesis. In terms of biological role, catalyzes the initial step of the lipid cycle reactions in the biosynthesis of the cell wall peptidoglycan: transfers peptidoglycan precursor phospho-MurNAc-pentapeptide from UDP-MurNAc-pentapeptide onto the lipid carrier undecaprenyl phosphate, yielding undecaprenyl-pyrophosphoryl-MurNAc-pentapeptide, known as lipid I. In Agrobacterium fabrum (strain C58 / ATCC 33970) (Agrobacterium tumefaciens (strain C58)), this protein is Phospho-N-acetylmuramoyl-pentapeptide-transferase.